A 412-amino-acid polypeptide reads, in one-letter code: Sterol-4-alpha-carboxylate 3-dehydrogenase erg26, decarboxylating (412 aa).

Residues 17 to 23 (GGCGFLG), 89 to 90 (DI), and 111 to 113 (TAT) each bind NADP(+). Substrate is bound by residues serine 158 and tyrosine 188. NADP(+) is bound by residues tyrosine 188, lysine 192, and 217-220 (PAGI). Lysine 192 serves as the catalytic Proton donor.

It belongs to the 3-beta-HSD family. In terms of assembly, heterotetramer of erg25, erg26, erg27 and erg28. Erg28 acts as a scaffold to tether erg27 and other 4,4-demethylation-related enzymes, forming a demethylation enzyme complex, in the endoplasmic reticulum.

It is found in the endoplasmic reticulum membrane. Its pathway is steroid metabolism; ergosterol biosynthesis. Functionally, sterol-C4-methyl oxidase; part of the third module of ergosterol biosynthesis pathway that includes the late steps of the pathway. Erg26 is a catalytic component of the C-4 demethylation complex that catalyzes the conversion of 4,4-dimethylfecosterol into fecosterol via 4-methylfecosterol. The third module or late pathway involves the ergosterol synthesis itself through consecutive reactions that mainly occur in the endoplasmic reticulum (ER) membrane. Firstly, the squalene synthase erg9 catalyzes the condensation of 2 farnesyl pyrophosphate moieties to form squalene, which is the precursor of all steroids. Squalene synthase is crucial for balancing the incorporation of farnesyl diphosphate (FPP) into sterol and nonsterol isoprene synthesis. Secondly, squalene is converted into lanosterol by the consecutive action of the squalene epoxidase erg1 and the lanosterol synthase erg7. Then, the delta(24)-sterol C-methyltransferase erg6 methylates lanosterol at C-24 to produce eburicol. Eburicol is the substrate of the sterol 14-alpha demethylase encoded by cyp51A and cyp51B, to yield 4,4,24-trimethyl ergosta-8,14,24(28)-trienol. The C-14 reductase erg24 then reduces the C14=C15 double bond which leads to 4,4-dimethylfecosterol. A sequence of further demethylations at C-4, involving the C-4 demethylation complex containing the C-4 methylsterol oxidases erg25A or erg25B, the sterol-4-alpha-carboxylate 3-dehydrogenase erg26 and the 3-keto-steroid reductase erg27, leads to the production of fecosterol via 4-methylfecosterol. The C-8 sterol isomerase erg2 then catalyzes the reaction which results in unsaturation at C-7 in the B ring of sterols and thus converts fecosterol to episterol. The sterol-C5-desaturase erg3B then catalyzes the introduction of a C-5 double bond in the B ring to produce 5-dehydroepisterol. The 2 other sterol-C5-desaturases, erg3A and erg3C, seem to be less important in ergosterol biosynthesis. The C-22 sterol desaturase erg5 further converts 5-dehydroepisterol into ergosta-5,7,22,24(28)-tetraen-3beta-ol by forming the C-22(23) double bond in the sterol side chain. Finally, ergosta-5,7,22,24(28)-tetraen-3beta-ol is substrate of the C-24(28) sterol reductases erg4A and erg4B to produce ergosterol. Possible alternative sterol biosynthetic pathways might exist from fecosterol to ergosterol, depending on the activities of the erg3 isoforms. The protein is Sterol-4-alpha-carboxylate 3-dehydrogenase erg26, decarboxylating of Aspergillus fumigatus (strain ATCC MYA-4609 / CBS 101355 / FGSC A1100 / Af293) (Neosartorya fumigata).